A 202-amino-acid polypeptide reads, in one-letter code: Ras-related protein ORAB-1 (202 aa).

GTP contacts are provided by residues G15–C23, Y33–T40, D63–Q67, N121–D124, and S151–K153. The Effector region signature appears at Y37–F45. Residues M173–C202 form a disordered region. Positions G180–K195 are enriched in polar residues. 2 S-geranylgeranyl cysteine lipidation sites follow: C201 and C202.

The protein belongs to the small GTPase superfamily. Rab family.

The protein resides in the cell membrane. Protein transport. Probably involved in vesicular traffic. The protein is Ras-related protein ORAB-1 of Diplobatis ommata (Ocellated electric ray).